A 141-amino-acid chain; its full sequence is Large ribosomal subunit protein uL11 (141 aa).

This sequence belongs to the universal ribosomal protein uL11 family. In terms of assembly, part of the ribosomal stalk of the 50S ribosomal subunit. Interacts with L10 and the large rRNA to form the base of the stalk. L10 forms an elongated spine to which L12 dimers bind in a sequential fashion forming a multimeric L10(L12)X complex. One or more lysine residues are methylated.

Forms part of the ribosomal stalk which helps the ribosome interact with GTP-bound translation factors. The polypeptide is Large ribosomal subunit protein uL11 (Synechococcus sp. (strain JA-3-3Ab) (Cyanobacteria bacterium Yellowstone A-Prime)).